Reading from the N-terminus, the 483-residue chain is Proline--tRNA ligase (483 aa).

This sequence belongs to the class-II aminoacyl-tRNA synthetase family. ProS type 3 subfamily. Homodimer.

It is found in the cytoplasm. It carries out the reaction tRNA(Pro) + L-proline + ATP = L-prolyl-tRNA(Pro) + AMP + diphosphate. In terms of biological role, catalyzes the attachment of proline to tRNA(Pro) in a two-step reaction: proline is first activated by ATP to form Pro-AMP and then transferred to the acceptor end of tRNA(Pro). This Natranaerobius thermophilus (strain ATCC BAA-1301 / DSM 18059 / JW/NM-WN-LF) protein is Proline--tRNA ligase.